Consider the following 389-residue polypeptide: Urotensin-2 receptor (389 aa).

Positions 1–10 (MALTPESPSS) are enriched in polar residues. The segment at 1 to 39 (MALTPESPSSFPGLAATGSSVPEPPGGPNATLNSSWASP) is disordered. The Extracellular segment spans residues 1 to 54 (MALTPESPSSFPGLAATGSSVPEPPGGPNATLNSSWASPTEPSSLEDLVATGTI). N-linked (GlcNAc...) asparagine glycosylation is found at asparagine 29 and asparagine 33. The segment covering 30 to 39 (ATLNSSWASP) has biased composition (polar residues). A helical transmembrane segment spans residues 55-77 (GTLLSAMGVVGVVGNAYTLVVTC). At 78-87 (RSLRAVASMY) the chain is on the cytoplasmic side. A helical transmembrane segment spans residues 88 to 113 (VYVVNLALADLLYLLSIPFIVATYVT). At 114–124 (KEWHFGDVGCR) the chain is on the extracellular side. Cysteine 123 and cysteine 199 are disulfide-bonded. A helical transmembrane segment spans residues 125 to 146 (VLFGLDFLTMHASIFTLTVMSS). Over 147–167 (ERYAAVLRPLDTVQRPKGYRK) the chain is Cytoplasmic. Residues 168-186 (LLALGTWLLALLLTLPVML) form a helical membrane-spanning segment. Residues 187–209 (AMRLVRRGPKSLCLPAWGPRAHR) are Extracellular-facing. The chain crosses the membrane as a helical span at residues 210–232 (AYLTLLFATSIAGPGLLIGLLYA). At 233–258 (RLARAYRRSQRASFKRARRPGARALR) the chain is on the cytoplasmic side. The helical transmembrane segment at 259 to 284 (LVLGIVLLFWACFLPFWLWQLLAQYH) threads the bilayer. The Extracellular portion of the chain corresponds to 285–297 (QAPLAPRTARIVN). The chain crosses the membrane as a helical span at residues 298 to 318 (YLTTCLTYGNSCANPFLYTLL). Residues 319 to 389 (TRNYRDHLRG…PAPEGPRAPA (71 aa)) lie on the Cytoplasmic side of the membrane. A disordered region spans residues 328–389 (GRVRGPGSGG…PAPEGPRAPA (62 aa)). A compositionally biased stretch (gly residues) spans 331–340 (RGPGSGGGRG). Positions 355–368 (SGRSLSSCSPQPTD) are enriched in polar residues. Positions 377-389 (PARPAPEGPRAPA) are enriched in pro residues.

It belongs to the G-protein coupled receptor 1 family. In terms of tissue distribution, most abundant expression in the heart and pancreas.

Its subcellular location is the cell membrane. Functionally, high affinity receptor for urotensin-2 and urotensin-2B. The activity of this receptor is mediated by a G-protein that activate a phosphatidylinositol-calcium second messenger system. This Homo sapiens (Human) protein is Urotensin-2 receptor (UTS2R).